The primary structure comprises 159 residues: Ribosomal RNA large subunit methyltransferase H (159 aa).

Residues leucine 76, glycine 108, and 127–132 each bind S-adenosyl-L-methionine; that span reads LSRLTF.

Belongs to the RNA methyltransferase RlmH family. In terms of assembly, homodimer.

It localises to the cytoplasm. The enzyme catalyses pseudouridine(1915) in 23S rRNA + S-adenosyl-L-methionine = N(3)-methylpseudouridine(1915) in 23S rRNA + S-adenosyl-L-homocysteine + H(+). Specifically methylates the pseudouridine at position 1915 (m3Psi1915) in 23S rRNA. The sequence is that of Ribosomal RNA large subunit methyltransferase H from Syntrophomonas wolfei subsp. wolfei (strain DSM 2245B / Goettingen).